The sequence spans 463 residues: ATP synthase subunit beta (463 aa).

152-159 serves as a coordination point for ATP; that stretch reads GGAGVGKT.

The protein belongs to the ATPase alpha/beta chains family. As to quaternary structure, F-type ATPases have 2 components, CF(1) - the catalytic core - and CF(0) - the membrane proton channel. CF(1) has five subunits: alpha(3), beta(3), gamma(1), delta(1), epsilon(1). CF(0) has three main subunits: a(1), b(2) and c(9-12). The alpha and beta chains form an alternating ring which encloses part of the gamma chain. CF(1) is attached to CF(0) by a central stalk formed by the gamma and epsilon chains, while a peripheral stalk is formed by the delta and b chains.

The protein localises to the cell inner membrane. The catalysed reaction is ATP + H2O + 4 H(+)(in) = ADP + phosphate + 5 H(+)(out). Its function is as follows. Produces ATP from ADP in the presence of a proton gradient across the membrane. The catalytic sites are hosted primarily by the beta subunits. This Shewanella putrefaciens (strain CN-32 / ATCC BAA-453) protein is ATP synthase subunit beta.